We begin with the raw amino-acid sequence, 838 residues long: Protein translocase subunit SecA (838 aa).

ATP is bound by residues Gln-87, 105-109, and Asp-494; that span reads GEGKT. 2 stretches are compositionally biased toward basic and acidic residues: residues 781 to 790 and 803 to 819; these read EQEFQHKDET and EDAK…KVGR. Residues 781 to 838 form a disordered region; sequence EQEFQHKDETANVQYSGPAESAEDAKKEPKRREAPKVGRNDPCPCGSGKKYKKCHGAK. Positions 823, 825, 834, and 835 each coordinate Zn(2+). Residues 829-838 are compositionally biased toward basic residues; it reads KKYKKCHGAK.

Belongs to the SecA family. In terms of assembly, monomer and homodimer. Part of the essential Sec protein translocation apparatus which comprises SecA, SecYEG and auxiliary proteins SecDF-YajC and YidC. The cofactor is Zn(2+).

It localises to the cell inner membrane. Its subcellular location is the cytoplasm. The catalysed reaction is ATP + H2O + cellular proteinSide 1 = ADP + phosphate + cellular proteinSide 2.. Its function is as follows. Part of the Sec protein translocase complex. Interacts with the SecYEG preprotein conducting channel. Has a central role in coupling the hydrolysis of ATP to the transfer of proteins into and across the cell membrane, serving as an ATP-driven molecular motor driving the stepwise translocation of polypeptide chains across the membrane. The chain is Protein translocase subunit SecA from Solidesulfovibrio magneticus (strain ATCC 700980 / DSM 13731 / RS-1) (Desulfovibrio magneticus).